The following is a 906-amino-acid chain: Eukaryotic translation initiation factor 3 subunit C (906 aa).

The tract at residues M1 to A22 is disordered. A compositionally biased stretch (acidic residues) spans S11 to V20. S34, S165, S176, and S185 each carry phosphoserine. Residues R158 to E283 form a disordered region. Acidic residues predominate over residues D162 to D186. The span at E195 to A209 shows a compositional bias: low complexity. The span at A211–N237 shows a compositional bias: acidic residues. Residues M242–I270 are compositionally biased toward basic and acidic residues. The PCI domain maps to F641–P817. Disordered stretches follow at residues G853–G873 and Q887–E906. Over residues Q894 to E906 the composition is skewed to low complexity.

It belongs to the eIF-3 subunit C family. In terms of assembly, component of the eukaryotic translation initiation factor 3 (eIF-3) complex. The eIF-3 complex interacts with pix.

Its subcellular location is the cytoplasm. In terms of biological role, component of the eukaryotic translation initiation factor 3 (eIF-3) complex, which is involved in protein synthesis of a specialized repertoire of mRNAs and, together with other initiation factors, stimulates binding of mRNA and methionyl-tRNAi to the 40S ribosome. The eIF-3 complex specifically targets and initiates translation of a subset of mRNAs involved in cell proliferation. The protein is Eukaryotic translation initiation factor 3 subunit C of Drosophila ananassae (Fruit fly).